Here is a 378-residue protein sequence, read N- to C-terminus: MESDLIDLFEGAKKAADAAALDGVTSSGPEVSQCIDALKQLKKFPVTYDTLVATQVGKKLRSLAKHPVEDIKSVATDLLEIWKKVVIEETAKAKKTEGTNGCKEAKVNKMDVEKPSNPAPVKVQKLQRGDSAKSIKVERKEPDNKVVTGVKIERKVPDIKVTNGTKIDYRGQAVKDEKVSKDNQSSMKAPAKAANAPPKLTAMLKCNDPVRDKIRELLVEALCRVAGEADDYERESVNASDPLRVAVSVESLMFEKLGRSTGAQKLKYRSIMFNLRDSNNPDLRRRVLTGEISPEKLITLSAEDMASDKRKQENNQIKEKALFDCERGLAAKASTDQFKCGRCGQRKCTYYQMQTRSADEPMTTYVTCVNCDNHWKFC.

The residue at position 1 (M1) is an N-acetylmethionine. The TFIIS N-terminal domain maps to 10–89 (EGAKKAADAA…EIWKKVVIEE (80 aa)). One can recognise a TFIIS central domain in the interval 210-333 (VRDKIRELLV…DCERGLAAKA (124 aa)). A TFIIS-type zinc finger spans residues 336-376 (DQFKCGRCGQRKCTYYQMQTRSADEPMTTYVTCVNCDNHWK). C340, C343, C368, and C371 together coordinate Zn(2+).

Expressed in roots, leaves and flowers.

Its subcellular location is the nucleus. Functionally, necessary for efficient RNA polymerase II transcription elongation past template-encoded arresting sites. Involved in the control of seed dormancy and germination. The chain is Transcription elongation factor TFIIS from Arabidopsis thaliana (Mouse-ear cress).